Reading from the N-terminus, the 353-residue chain is UPF0324 membrane protein PP_3661 (353 aa).

Helical transmembrane passes span 20–42 (LNGI…MPAI), 70–92 (ASWA…AFFG), 105–127 (WSGL…WCGM), 137–159 (ALLT…ESAL), 166–188 (SAMA…PLAI), 234–253 (MTRV…WISR), 266–288 (IAMP…QVLP), and 326–348 (ALAT…TLGV).

This sequence belongs to the UPF0324 family.

The protein localises to the cell membrane. The chain is UPF0324 membrane protein PP_3661 from Pseudomonas putida (strain ATCC 47054 / DSM 6125 / CFBP 8728 / NCIMB 11950 / KT2440).